A 151-amino-acid chain; its full sequence is UPF0178 protein ESA_02916 (151 aa).

The protein belongs to the UPF0178 family.

This Cronobacter sakazakii (strain ATCC BAA-894) (Enterobacter sakazakii) protein is UPF0178 protein ESA_02916.